The sequence spans 1009 residues: Glutamate receptor ionotropic, delta-1 (1009 aa).

An N-terminal signal peptide occupies residues 1–20 (MEALTLWLLPWICQCVTVRA). Residues 21 to 436 (DSIIHIGAIF…ERPMGSRLQG (416 aa)) form an interaction with CBLN1 region. Residues 21-562 (DSIIHIGAIF…SIFSLFAPFD (542 aa)) are Extracellular-facing. Disulfide bonds link Cys80–Cys351, Cys96–Cys128, and Cys294–Cys306. N-linked (GlcNAc...) asparagine glycans are attached at residues Asn131 and Asn200. 2 N-linked (GlcNAc...) asparagine glycosylation sites follow: Asn422 and Asn498. Positions 527, 530, and 531 each coordinate Ca(2+). Residues 563-583 (FAVWACIAAAIPVVGVLIFVL) form a helical membrane-spanning segment. At 584–637 (NRIQAVRSQSATQPRPSASATLHSAIWIVYGAFVQQGGESSVNSVAMRIVMGSW) the chain is on the cytoplasmic side. A helical transmembrane segment spans residues 638–658 (WLFTLIVCSSYTANLAAFLTV). The Extracellular portion of the chain corresponds to 659–830 (SRMDNPIRTF…TEGKSLKLHS (172 aa)). The Ca(2+) site is built by Asp753, Asp755, and Ser757. A helical transmembrane segment spans residues 831–851 (FAGVFCILAIGLLLACLVAAL). The Cytoplasmic portion of the chain corresponds to 852–1009 (ELWWNSNRCH…ALDTSHGTSI (158 aa)). Residues 931-942 (LPEQSSHGTSRT) are compositionally biased toward polar residues. The segment at 931–960 (LPEQSSHGTSRTLSSGPSSNLPLPLSSSAT) is disordered. Low complexity predominate over residues 943–958 (LSSGPSSNLPLPLSSS).

This sequence belongs to the glutamate-gated ion channel (TC 1.A.10.1) family. GRID1 subfamily. In terms of assembly, homodimer. Interacts (via extracellular N-terminal domain) with CBLN1 (via C1q domain), and more weakly with CBLN2; the interactions mediate the trans-synaptic adhesion complexes also with neurexins and are required for ligand-gated cation channel activity. As to expression, equally in forebrain and cerebellum.

Its subcellular location is the postsynaptic cell membrane. The enzyme catalyses Ca(2+)(in) = Ca(2+)(out). It catalyses the reaction Na(+)(in) = Na(+)(out). Its function is as follows. Member of the ionotropic glutamate receptor family, which plays a crucial role in synaptic organization and signal transduction in the central nervous system. Although it shares structural features with ionotropic glutamate receptors, does not bind glutamate as a primary ligand. Instead, forms trans-synaptic adhesion complexes with presynaptic neurexins and cerebellins, regulating NMDA and AMPA receptor activity and influencing synaptic plasticity through signal transduction. In the presence of NRX1B-CBLN1, forms cation-selective channels that are proposed to be gated by glycine and D-serine. However, recent research disputes this ligand-gated cation channel activity. Cation-selective ion channel can be triggered by GRM1 in dopaminergic neurons. Also acts as a receptor for GABA, modulating inhibitory synaptic plasticity through non-ionotropic mechanisms. The protein is Glutamate receptor ionotropic, delta-1 (Grid1) of Mus musculus (Mouse).